The sequence spans 317 residues: Phospholipase A1 1 (317 aa).

The N-terminal stretch at 1-7 (RLIMFVG) is a signal peptide. The propeptide occupies 8–17 (DPSSSNELDR). The cysteines at positions 21 and 104 are disulfide-linked. Asn25 carries an N-linked (GlcNAc...) asparagine glycan. Ser154 functions as the Nucleophile in the catalytic mechanism. Asp182 (charge relay system) is an active-site residue. Cys193 and Cys198 are oxidised to a cystine. A glycan (N-linked (GlcNAc...) asparagine) is linked at Asn229. Cys236 and Cys244 are joined by a disulfide. His246 (charge relay system) is an active-site residue. 3 cysteine pairs are disulfide-bonded: Cys261–Cys285, Cys262–Cys310, and Cys278–Cys283.

This sequence belongs to the AB hydrolase superfamily. Lipase family. As to expression, expressed by the venom gland.

Its subcellular location is the secreted. It carries out the reaction a 1,2-diacyl-sn-glycero-3-phosphocholine + H2O = a 2-acyl-sn-glycero-3-phosphocholine + a fatty acid + H(+). Its function is as follows. Catalyzes the hydrolysis of phosphatidylcholine with phospholipase A1 activity. May act as an allergen and induce hemolytic activity. This chain is Phospholipase A1 1, found in Dolichovespula maculata (Bald-faced hornet).